Here is a 504-residue protein sequence, read N- to C-terminus: Peroxisomal catalase (504 aa).

Active-site residues include H63 and N136. Residue Y345 coordinates heme. The Microbody targeting signal motif lies at 502–504 (NKF).

Belongs to the catalase family. Heme serves as cofactor.

The protein localises to the peroxisome matrix. It catalyses the reaction 2 H2O2 = O2 + 2 H2O. Catalyzes the degradation of hydrogen peroxide (H(2)O(2)) generated by peroxisomal oxidases to water and oxygen, thereby protecting cells from the toxic effects of hydrogen peroxide. The protein is Peroxisomal catalase (CTA1) of Candida boidinii (Yeast).